The following is a 337-amino-acid chain: Zinc finger protein 488 (337 aa).

The span at 1-10 (MAAGTSTLLS) shows a compositional bias: polar residues. Disordered regions lie at residues 1 to 32 (MAAG…SVEK), 55 to 83 (SDTA…PRLD), and 146 to 179 (SAWP…MLLA). Residues 69 to 184 (TELSLPTAPN…PMLLAGGSAE (116 aa)) form an important for transcriptional repression activity region. C2H2-type zinc fingers lie at residues 272-299 (NWCA…KREH) and 314-336 (LTCP…MASH). The Nuclear localization signal motif lies at 295–302 (HKREHVGP).

It belongs to the krueppel C2H2-type zinc-finger protein family. Interacts with OLIG2.

It is found in the nucleus. Functionally, transcriptional repressor. Plays a role in oligodendrocyte differentiation, together with OLIG2. Mediates Notch signaling-activated formation of oligodendrocyte precursors. Promotes differentiation of adult neural stem progenitor cells (NSPCs) into mature oligodendrocytes and contributes to remyelination following nerve injury. This is Zinc finger protein 488 (Znf488) from Mus musculus (Mouse).